Reading from the N-terminus, the 1104-residue chain is Lon protease homolog, mitochondrial (1104 aa).

Residues 1–54 (MLRGQTLRWRAALQTPRSLILRPLFAPGGYNVGPRSVLETSRRFRSLPPSLRTF) constitute a mitochondrion transit peptide. 2 disordered regions span residues 41 to 192 (SRRF…KPSV) and 296 to 317 (SLIPPGDSTKSGNSEDKTTEKR). 2 stretches are compositionally biased toward basic and acidic residues: residues 64-104 (KPPP…DSSG) and 125-144 (KAADRDQRSVTEDAKREAEA). Low complexity predominate over residues 158–169 (SDSSSESKPSGS). Basic and acidic residues-rich tracts occupy residues 172 to 187 (GGDDGGKKGKKNDKAL) and 308 to 317 (NSEDKTTEKR). A Lon N-terminal domain is found at 199-451 (VMAIPIAKRP…KGLVVLKKEL (253 aa)). 604-611 (GPPGVGKT) serves as a coordination point for ATP. Residues 825-839 (AEGKAAQEESEKETG) are compositionally biased toward basic and acidic residues. A disordered region spans residues 825-857 (AEGKAAQEESEKETGPIESTSEQEKATTENPRV). Residues 891 to 1077 (TFPPGVTMGL…SEVFDILFAD (187 aa)) enclose the Lon proteolytic domain. Catalysis depends on residues Ser-983 and Lys-1026.

Belongs to the peptidase S16 family. As to quaternary structure, homohexamer or homoheptamer. Organized in a ring with a central cavity.

The protein localises to the mitochondrion matrix. It carries out the reaction Hydrolysis of proteins in presence of ATP.. In terms of biological role, ATP-dependent serine protease that mediates the selective degradation of misfolded, unassembled or oxidatively damaged polypeptides as well as certain short-lived regulatory proteins in the mitochondrial matrix. May also have a chaperone function in the assembly of inner membrane protein complexes. Participates in the regulation of mitochondrial gene expression and in the maintenance of the integrity of the mitochondrial genome. Binds to mitochondrial DNA in a site-specific manner. The protein is Lon protease homolog, mitochondrial (pim1) of Emericella nidulans (strain FGSC A4 / ATCC 38163 / CBS 112.46 / NRRL 194 / M139) (Aspergillus nidulans).